The primary structure comprises 75 residues: Phytosulfokines 3 (75 aa).

The signal sequence occupies residues 1-22 (MSPKVIAICLVALLLPISISHG). Positions 23-66 (GRIGPIEPSKASSKVVERGNYDGRVEGCEEDDCLVERLLVAHLD) are excised as a propeptide. Sulfotyrosine is present on residues tyrosine 67 and tyrosine 69. The propeptide occupies 72–75 (GKHN).

This sequence belongs to the phytosulfokine family. Post-translationally, sulfation is important for activity and for the binding to a putative membrane receptor. In terms of processing, PSK-alpha is produced by endopeptidase digestion. PSK-beta is produced from PSK-alpha by exopeptidase digestion.

The protein localises to the secreted. Promotes plant cell differentiation, organogenesis and somatic embryogenesis as well as cell proliferation. The chain is Phytosulfokines 3 (PSK3) from Oryza sativa subsp. japonica (Rice).